The following is a 360-amino-acid chain: Photosystem II protein D1 2 (360 aa).

3 helical membrane-spanning segments follow: residues 29-46, 118-133, and 142-156; these read YIGW…AATI, HFLI…EWEL, and WIPV…AATA. Residue His-118 participates in chlorophyll a binding. Tyr-126 contributes to the pheophytin a binding site. Positions 170 and 189 each coordinate [CaMn4O5] cluster. Residues 197-218 traverse the membrane as a helical segment; the sequence is FHMLGVAGVFGGALFAAMHGSL. His-198 lines the chlorophyll a pocket. Residues His-215 and 264 to 265 each bind a quinone; that span reads SF. His-215 contacts Fe cation. A Fe cation-binding site is contributed by His-272. Residues 274-288 form a helical membrane-spanning segment; it reads FLAAWPVVGIWFAAL. The [CaMn4O5] cluster site is built by His-332, Glu-333, Asp-342, and Ala-344. A propeptide spanning residues 345-360 is cleaved from the precursor; the sequence is SGELAPVAMIAPSIEA.

The protein belongs to the reaction center PufL/M/PsbA/D family. PSII is composed of 1 copy each of membrane proteins PsbA, PsbB, PsbC, PsbD, PsbE, PsbF, PsbH, PsbI, PsbJ, PsbK, PsbL, PsbM, PsbT, PsbX, PsbY, PsbZ, Psb30/Ycf12, peripheral proteins PsbO, CyanoQ (PsbQ), PsbU, PsbV and a large number of cofactors. It forms dimeric complexes. It depends on The D1/D2 heterodimer binds P680, chlorophylls that are the primary electron donor of PSII, and subsequent electron acceptors. It shares a non-heme iron and each subunit binds pheophytin, quinone, additional chlorophylls, carotenoids and lipids. D1 provides most of the ligands for the Mn4-Ca-O5 cluster of the oxygen-evolving complex (OEC). There is also a Cl(-1) ion associated with D1 and D2, which is required for oxygen evolution. The PSII complex binds additional chlorophylls, carotenoids and specific lipids. as a cofactor. Tyr-161 forms a radical intermediate that is referred to as redox-active TyrZ, YZ or Y-Z. In terms of processing, C-terminally processed by CtpA; processing is essential to allow assembly of the oxygen-evolving complex and thus photosynthetic growth.

It localises to the cellular thylakoid membrane. It carries out the reaction 2 a plastoquinone + 4 hnu + 2 H2O = 2 a plastoquinol + O2. Its function is as follows. Photosystem II (PSII) is a light-driven water:plastoquinone oxidoreductase that uses light energy to abstract electrons from H(2)O, generating O(2) and a proton gradient subsequently used for ATP formation. It consists of a core antenna complex that captures photons, and an electron transfer chain that converts photonic excitation into a charge separation. The D1/D2 (PsbA/PsbD) reaction center heterodimer binds P680, the primary electron donor of PSII as well as several subsequent electron acceptors. This chain is Photosystem II protein D1 2, found in Synechococcus elongatus.